Reading from the N-terminus, the 149-residue chain is Protein Rv2250A (149 aa).

The polypeptide is Protein Rv2250A (Mycobacterium tuberculosis (strain ATCC 25618 / H37Rv)).